We begin with the raw amino-acid sequence, 396 residues long: Elongation factor Tu (396 aa).

Residues 10–205 enclose the tr-type G domain; sequence KPHVNIGTIG…AVDESIPDPV (196 aa). The segment at 19–26 is G1; it reads GHVDHGKT. GTP is bound at residue 19 to 26; the sequence is GHVDHGKT. Threonine 26 is a Mg(2+) binding site. Positions 62–66 are G2; it reads GITIN. Positions 83–86 are G3; it reads DAPG. GTP contacts are provided by residues 83–87 and 138–141; these read DAPGH and NKAD. The tract at residues 138–141 is G4; that stretch reads NKAD. Residues 175–177 are G5; the sequence is SAL.

Belongs to the TRAFAC class translation factor GTPase superfamily. Classic translation factor GTPase family. EF-Tu/EF-1A subfamily. Monomer.

The protein localises to the cytoplasm. It catalyses the reaction GTP + H2O = GDP + phosphate + H(+). Its function is as follows. GTP hydrolase that promotes the GTP-dependent binding of aminoacyl-tRNA to the A-site of ribosomes during protein biosynthesis. This Mycobacterium bovis (strain ATCC BAA-935 / AF2122/97) protein is Elongation factor Tu.